We begin with the raw amino-acid sequence, 944 residues long: E3 ubiquitin-protein ligase HACE1 (944 aa).

7 ANK repeats span residues 23 to 55 (LPED…NSKF), 64 to 93 (VKRS…DPNY), 97 to 126 (SGCT…DVNI), 130 to 159 (EGLT…NVDV), 163 to 192 (MGQT…DINR), 196 to 226 (SGAT…YLPD), and 228 to 253 (NGVT…QHHP). The HECT domain occupies 609–944 (NCEKLKQGIA…HCGSYGYTMA (336 aa)). Cys911 functions as the Glycyl thioester intermediate in the catalytic mechanism.

The protein localises to the golgi apparatus. It is found in the golgi stack membrane. The protein resides in the cytoplasm. Its subcellular location is the endoplasmic reticulum. The catalysed reaction is S-ubiquitinyl-[E2 ubiquitin-conjugating enzyme]-L-cysteine + [acceptor protein]-L-lysine = [E2 ubiquitin-conjugating enzyme]-L-cysteine + N(6)-ubiquitinyl-[acceptor protein]-L-lysine.. Its pathway is protein modification; protein ubiquitination. Functionally, E3 ubiquitin-protein ligase involved in Golgi membrane fusion and regulation of small GTPases. Acts as a regulator of Golgi membrane dynamics during the cell cycle: recruited to Golgi membrane by Rab proteins and regulates postmitotic Golgi membrane fusion. Acts by mediating ubiquitination during mitotic Golgi disassembly, ubiquitination serving as a signal for Golgi reassembly later, after cell division. This chain is E3 ubiquitin-protein ligase HACE1 (hace1), found in Xenopus laevis (African clawed frog).